The chain runs to 380 residues: Glutamine synthetase, chloroplastic (380 aa).

In terms of domain architecture, GS beta-grasp spans 35–125; it reads MAAEYIWADG…VMCEVFAPDG (91 aa). Residues 132 to 380 enclose the GS catalytic domain; the sequence is TRAKLREIID…RLLIKTVLKG (249 aa).

This sequence belongs to the glutamine synthetase family. In terms of assembly, homooctamer.

The protein resides in the plastid. Its subcellular location is the chloroplast. It catalyses the reaction L-glutamate + NH4(+) + ATP = L-glutamine + ADP + phosphate + H(+). This Chlamydomonas reinhardtii (Chlamydomonas smithii) protein is Glutamine synthetase, chloroplastic (GLN2).